The sequence spans 350 residues: Heat-inducible transcription repressor HrcA (350 aa).

Belongs to the HrcA family.

Functionally, negative regulator of class I heat shock genes (grpE-dnaK-dnaJ and groELS operons). Prevents heat-shock induction of these operons. The protein is Heat-inducible transcription repressor HrcA of Xanthomonas campestris pv. campestris (strain ATCC 33913 / DSM 3586 / NCPPB 528 / LMG 568 / P 25).